We begin with the raw amino-acid sequence, 240 residues long: 1-(5-phosphoribosyl)-5-[(5-phosphoribosylamino)methylideneamino] imidazole-4-carboxamide isomerase (240 aa).

Asp-8 acts as the Proton acceptor in catalysis. Catalysis depends on Asp-129, which acts as the Proton donor.

This sequence belongs to the HisA/HisF family.

It localises to the cytoplasm. It catalyses the reaction 1-(5-phospho-beta-D-ribosyl)-5-[(5-phospho-beta-D-ribosylamino)methylideneamino]imidazole-4-carboxamide = 5-[(5-phospho-1-deoxy-D-ribulos-1-ylimino)methylamino]-1-(5-phospho-beta-D-ribosyl)imidazole-4-carboxamide. It functions in the pathway amino-acid biosynthesis; L-histidine biosynthesis; L-histidine from 5-phospho-alpha-D-ribose 1-diphosphate: step 4/9. In Listeria monocytogenes serotype 4a (strain HCC23), this protein is 1-(5-phosphoribosyl)-5-[(5-phosphoribosylamino)methylideneamino] imidazole-4-carboxamide isomerase.